Here is an 815-residue protein sequence, read N- to C-terminus: (-)-kolavenyl diphosphate synthase TPS14, chloroplastic (815 aa).

The N-terminal 51 residues, 1–51 (MFMSSSSSSHARRPQLSSFSYLHPPLPFPGLSFFNTRDKRVNFDSTRIICI), are a transit peptide targeting the chloroplast. Lys247 serves as a coordination point for substrate. Residues Asp379 and Asp381 each coordinate Mg(2+). A DXDD motif motif is present at residues 379-382 (DIDD). Lys465 contributes to the substrate binding site.

The protein belongs to the terpene synthase family. Tpsc subfamily. Mg(2+) serves as cofactor.

The protein localises to the plastid. It is found in the chloroplast. The enzyme catalyses (2E,6E,10E)-geranylgeranyl diphosphate = (-)-kolavenyl diphosphate. Its activity is regulated as follows. Inhibited by high concentrations of magnesium. Diterpene synthase that catalyzes the formation of (-)-kolavenyl diphosphate from geranylgeranyl diphosphate (GGPP). This is (-)-kolavenyl diphosphate synthase TPS14, chloroplastic from Tripterygium wilfordii (Thunder God vine).